The sequence spans 606 residues: UvrABC system protein C (606 aa).

Residues 18-96 (SQPGVYRMMN…IKSLNPRYNI (79 aa)) form the GIY-YIG domain. Residues 205–240 (TEVLKSITRKMHEAAEEQEYEQAALFRDQIQSLRKI) enclose the UVR domain.

It belongs to the UvrC family. As to quaternary structure, interacts with UvrB in an incision complex.

Its subcellular location is the cytoplasm. In terms of biological role, the UvrABC repair system catalyzes the recognition and processing of DNA lesions. UvrC both incises the 5' and 3' sides of the lesion. The N-terminal half is responsible for the 3' incision and the C-terminal half is responsible for the 5' incision. In Nitrosospira multiformis (strain ATCC 25196 / NCIMB 11849 / C 71), this protein is UvrABC system protein C.